A 204-amino-acid chain; its full sequence is Phosphoheptose isomerase (204 aa).

An SIS domain is found at 38–199; sequence MAVALARGGK…LFEAVMELGP (162 aa). Residue 53 to 55 coordinates substrate; it reads NGG. Zn(2+)-binding residues include His62 and Glu66. Substrate-binding positions include Glu66, 95–96, 121–123, Ser126, and Gln172; these read ND and STS. Positions 172 and 180 each coordinate Zn(2+).

This sequence belongs to the SIS family. GmhA subfamily. Homotetramer. Zn(2+) is required as a cofactor.

Its subcellular location is the cytoplasm. The catalysed reaction is 2 D-sedoheptulose 7-phosphate = D-glycero-alpha-D-manno-heptose 7-phosphate + D-glycero-beta-D-manno-heptose 7-phosphate. It participates in carbohydrate biosynthesis; D-glycero-D-manno-heptose 7-phosphate biosynthesis; D-glycero-alpha-D-manno-heptose 7-phosphate and D-glycero-beta-D-manno-heptose 7-phosphate from sedoheptulose 7-phosphate: step 1/1. Catalyzes the isomerization of sedoheptulose 7-phosphate in D-glycero-D-manno-heptose 7-phosphate. This is Phosphoheptose isomerase from Solidesulfovibrio magneticus (strain ATCC 700980 / DSM 13731 / RS-1) (Desulfovibrio magneticus).